A 284-amino-acid polypeptide reads, in one-letter code: RNA polymerase sigma factor RpoH (284 aa).

A sigma-70 factor domain-2 region spans residues 53-122; sequence LILSHLRFVI…IHEYVLRNWR (70 aa). The Interaction with polymerase core subunit RpoC motif lies at 77 to 80; that stretch reads DLIQ. Residues 228-280 are sigma-70 factor domain-4; that stretch reads ALLRLDERSRHIIHARWLDKNKKNTLQNIANNYGISAERVRQLEKNAMKKLKL. The H-T-H motif DNA-binding region spans 253–272; it reads LQNIANNYGISAERVRQLEK.

This sequence belongs to the sigma-70 factor family. RpoH subfamily. As to quaternary structure, interacts with the RNA polymerase core enzyme.

The protein localises to the cytoplasm. Functionally, sigma factors are initiation factors that promote the attachment of RNA polymerase to specific initiation sites and are then released. This sigma factor is involved in regulation of expression of heat shock genes. The protein is RNA polymerase sigma factor RpoH of Buchnera aphidicola subsp. Acyrthosiphon pisum (strain APS) (Acyrthosiphon pisum symbiotic bacterium).